Reading from the N-terminus, the 196-residue chain is MINKICGKIVEKRESSIVIVALPFEFEILVSSFCNAELGLQEDVEILTYLHLREDEIRLFGFLNVSEREVFEKLISVDGIGPKAALRILSGIKYNEFRDAVEREDVKLISNVKGIGNKMAGKIFLKLRGKLVKVNEASSGVLKFKELEQSIVNMGFDRKLVAAAIKEIMLIDEFLMLRQVDQEQFLFREILRKLSG.

The segment at M1–L63 is domain I. The tract at residues N64–N135 is domain II. The segment at N135–S138 is flexible linker. Residues S139–G196 form a domain III region.

This sequence belongs to the RuvA family. Homotetramer. Forms an RuvA(8)-RuvB(12)-Holliday junction (HJ) complex. HJ DNA is sandwiched between 2 RuvA tetramers; dsDNA enters through RuvA and exits via RuvB. An RuvB hexamer assembles on each DNA strand where it exits the tetramer. Each RuvB hexamer is contacted by two RuvA subunits (via domain III) on 2 adjacent RuvB subunits; this complex drives branch migration. In the full resolvosome a probable DNA-RuvA(4)-RuvB(12)-RuvC(2) complex forms which resolves the HJ.

The protein localises to the cytoplasm. Functionally, the RuvA-RuvB-RuvC complex processes Holliday junction (HJ) DNA during genetic recombination and DNA repair, while the RuvA-RuvB complex plays an important role in the rescue of blocked DNA replication forks via replication fork reversal (RFR). RuvA specifically binds to HJ cruciform DNA, conferring on it an open structure. The RuvB hexamer acts as an ATP-dependent pump, pulling dsDNA into and through the RuvAB complex. HJ branch migration allows RuvC to scan DNA until it finds its consensus sequence, where it cleaves and resolves the cruciform DNA. In Borrelia turicatae (strain 91E135), this protein is Holliday junction branch migration complex subunit RuvA.